Reading from the N-terminus, the 238-residue chain is Monocyte to macrophage differentiation factor (238 aa).

At 1 to 28 the chain is on the cytoplasmic side; it reads MQFRNRFQRFMNHRAPANGRYKPTCYEH. Residues 29-49 traverse the membrane as a helical segment; sequence AANCYTHAFLIVPAIVGSALL. Residues 50 to 61 lie on the Lumenal side of the membrane; sequence HRLSDDCWEKIT. A helical membrane pass occupies residues 62–82; that stretch reads AWIYGMGLCALFIVSTVFHIV. Topologically, residues 83 to 101 are cytoplasmic; sequence SWKKSHLRTVEHCFHMCDR. Residues 102–122 form a helical membrane-spanning segment; that stretch reads MVIYFFIAASYAPWLNLRELG. P123 is a topological domain (lumenal). A helical membrane pass occupies residues 124-144; sequence LASHMRWFIWLMAAGGTIYVF. Topologically, residues 145–151 are cytoplasmic; that stretch reads LYHEKYK. A helical membrane pass occupies residues 152 to 172; it reads VVELFFYLTMGFSPALVVTSM. Residues 173 to 174 lie on the Lumenal side of the membrane; sequence NN. A helical transmembrane segment spans residues 175–195; the sequence is TDGLQELACGGLIYCLGVVFF. At 196–198 the chain is on the cytoplasmic side; sequence KSD. The chain crosses the membrane as a helical span at residues 199–219; it reads GIIPFAHAIWHLFVATAAAVH. The Lumenal segment spans residues 220–238; it reads YYAIWKYLYRSPTDFIRHL.

This sequence belongs to the ADIPOR family. Preferentially expressed in the brain.

The protein resides in the late endosome membrane. The protein localises to the lysosome membrane. Its function is as follows. Is involved in the dynamics of lysosomal membranes associated with microglial activation following brain lesion. This chain is Monocyte to macrophage differentiation factor, found in Rattus norvegicus (Rat).